The chain runs to 313 residues: MSFSTIVKDELCRIELHDECCMKSEILGVILIGNLFSNEKILRNTKVVTENAAFARRIYSIFRRIYGICPEVSIRRSSKLKKHVSYSLTLVPNQMINKILYDFGISAFTEDEYIPAASTLEKVCCRKSFLRAAFLSGGSISDPEKTYHLEISTHNIMSAEMIKDLLDDYNINTKIIKRKGSYVAYIKEGEQIVDFLNIIGAHGALMELENVRILKDMRNNVNRIVNCETANLEKTVNASIRQIENIKYIESTIGIDKLPENLVEIADVRVQFRDASLKELGEMLHPKLGKSGVNHRLRKLDEIAERIRKNNQR.

A DNA-binding region (H-T-H motif) is located at residues S276–K309.

The protein belongs to the WhiA family.

In terms of biological role, involved in cell division and chromosome segregation. This chain is Probable cell division protein WhiA, found in Ruminiclostridium cellulolyticum (strain ATCC 35319 / DSM 5812 / JCM 6584 / H10) (Clostridium cellulolyticum).